Reading from the N-terminus, the 234-residue chain is Purine nucleoside phosphorylase DeoD-type (234 aa).

Position 5 (His5) interacts with a purine D-ribonucleoside. Phosphate-binding positions include Gly21, Arg25, Arg44, and 88-91 (RIGT). A purine D-ribonucleoside contacts are provided by residues 180–182 (DME) and 204–205 (SD). The active-site Proton donor is the Asp205.

Belongs to the PNP/UDP phosphorylase family. In terms of assembly, homohexamer; trimer of homodimers.

The catalysed reaction is a purine D-ribonucleoside + phosphate = a purine nucleobase + alpha-D-ribose 1-phosphate. The enzyme catalyses a purine 2'-deoxy-D-ribonucleoside + phosphate = a purine nucleobase + 2-deoxy-alpha-D-ribose 1-phosphate. Its function is as follows. Catalyzes the reversible phosphorolytic breakdown of the N-glycosidic bond in the beta-(deoxy)ribonucleoside molecules, with the formation of the corresponding free purine bases and pentose-1-phosphate. This is Purine nucleoside phosphorylase DeoD-type from Buchnera aphidicola subsp. Acyrthosiphon pisum (strain APS) (Acyrthosiphon pisum symbiotic bacterium).